Here is a 247-residue protein sequence, read N- to C-terminus: V-type proton ATPase subunit D (247 aa).

It belongs to the V-ATPase D subunit family. As to quaternary structure, V-ATPase is a heteromultimeric enzyme made up of two complexes: the ATP-hydrolytic V1 complex and the proton translocation V0 complex. The V1 complex consists of three catalytic AB heterodimers that form a heterohexamer, three peripheral stalks each consisting of EG heterodimers, one central rotor including subunits D and F, and the regulatory subunits C and H. The proton translocation complex V0 consists of the proton transport subunit a, a ring of proteolipid subunits c9c'', rotary subunit d, subunits e and f, and the accessory subunits ATP6AP1/Ac45 and ATP6AP2/PRR. Interacts with SNX10.

It localises to the membrane. Its subcellular location is the cytoplasmic vesicle. The protein resides in the clathrin-coated vesicle membrane. It is found in the cytoplasm. The protein localises to the cytoskeleton. It localises to the microtubule organizing center. Its subcellular location is the centrosome. The protein resides in the cell projection. It is found in the cilium. Subunit of the V1 complex of vacuolar(H+)-ATPase (V-ATPase), a multisubunit enzyme composed of a peripheral complex (V1) that hydrolyzes ATP and a membrane integral complex (V0) that translocates protons. V-ATPase is responsible for acidifying and maintaining the pH of intracellular compartments and in some cell types, is targeted to the plasma membrane, where it is responsible for acidifying the extracellular environment. May play a role in cilium biogenesis through regulation of the transport and the localization of proteins to the cilium. In Oryctolagus cuniculus (Rabbit), this protein is V-type proton ATPase subunit D (ATP6V1D).